Reading from the N-terminus, the 329-residue chain is Acetyl-coenzyme A carboxylase carboxyl transferase subunit alpha (329 aa).

Positions 40–294 constitute a CoA carboxyltransferase C-terminal domain; it reads QLESLAARRR…RAAIERHLEQ (255 aa).

This sequence belongs to the AccA family. As to quaternary structure, acetyl-CoA carboxylase is a heterohexamer composed of biotin carboxyl carrier protein (AccB), biotin carboxylase (AccC) and two subunits each of ACCase subunit alpha (AccA) and ACCase subunit beta (AccD).

It localises to the cytoplasm. The enzyme catalyses N(6)-carboxybiotinyl-L-lysyl-[protein] + acetyl-CoA = N(6)-biotinyl-L-lysyl-[protein] + malonyl-CoA. Its pathway is lipid metabolism; malonyl-CoA biosynthesis; malonyl-CoA from acetyl-CoA: step 1/1. Component of the acetyl coenzyme A carboxylase (ACC) complex. First, biotin carboxylase catalyzes the carboxylation of biotin on its carrier protein (BCCP) and then the CO(2) group is transferred by the carboxyltransferase to acetyl-CoA to form malonyl-CoA. The polypeptide is Acetyl-coenzyme A carboxylase carboxyl transferase subunit alpha (Synechococcus sp. (strain CC9605)).